The sequence spans 305 residues: Triplex capsid protein 2 (305 aa).

The protein belongs to the herpesviridae TRX2 protein family. Interacts with TRX1 and major capisd protein/MCP.

The protein resides in the virion. The protein localises to the host nucleus. In terms of biological role, structural component of the T=16 icosahedral capsid. The capsid is composed of pentamers and hexamers of major capsid protein/MCP, which are linked together by heterotrimers called triplexes. These triplexes are formed by a single molecule of triplex protein 1/TRX1 and two copies of triplex protein 2/TRX2. Additionally, TRX1 is required for efficient transport of TRX2 to the nucleus, which is the site of capsid assembly. In Homo sapiens (Human), this protein is Triplex capsid protein 2.